Consider the following 288-residue polypeptide: MDGFINLLKPPGMTSHDVVAYVRKKLKTGKVGHLGTLDPAAAGVLPVAVGQATRLIEYLENVAMKEYLAEIVFGITTATWDMEGEILEQKDASFLTAGDIEKVLGHFHGEIEQTPPLASAVKVSGKPLYRYQRQGEKVEPPKRKVFIDSIELLEFLADKPQPAVRLYIRCSRGTYIRSIANEIGNLLKTGATLKFLLRTRSGPFLLDDSNLLHEDFTLIPPEQLFQDFPKINLTREQYLRVKNGGGVKVETKGENFGPVFAYYGEKIIATGMICGQIFRPEKVFRFGE.

Asp-38 acts as the Nucleophile in catalysis.

Belongs to the pseudouridine synthase TruB family. Type 1 subfamily.

It catalyses the reaction uridine(55) in tRNA = pseudouridine(55) in tRNA. In terms of biological role, responsible for synthesis of pseudouridine from uracil-55 in the psi GC loop of transfer RNAs. This is tRNA pseudouridine synthase B from Carboxydothermus hydrogenoformans (strain ATCC BAA-161 / DSM 6008 / Z-2901).